A 468-amino-acid polypeptide reads, in one-letter code: Methionine aminopeptidase 2 (468 aa).

Residues 1–10 show a composition bias toward basic and acidic residues; it reads MGSKTFEGEG. The interval 1 to 106 is disordered; the sequence is MGSKTFEGEG…PPRVPLDDLF (106 aa). Polar residues predominate over residues 16–25; sequence DPSNSTSPNS. Residues 31-40 are compositionally biased toward basic and acidic residues; the sequence is RGAHLSRDGD. Acidic residues predominate over residues 46–56; that stretch reads GDGDDGADGDE. Polar residues predominate over residues 61-75; the sequence is VTTTPLTEQQPSSET. Residues 78–90 show a composition bias toward basic residues; that stretch reads KKKKRRKPKKKIS. H219 is a binding site for substrate. Residues D240, D251, and H320 each contribute to the a divalent metal cation site. H328 lines the substrate pocket. 2 residues coordinate a divalent metal cation: E353 and E449.

This sequence belongs to the peptidase M24A family. Methionine aminopeptidase eukaryotic type 2 subfamily. Co(2+) serves as cofactor. It depends on Zn(2+) as a cofactor. Mn(2+) is required as a cofactor. The cofactor is Fe(2+).

It localises to the cytoplasm. It catalyses the reaction Release of N-terminal amino acids, preferentially methionine, from peptides and arylamides.. Cotranslationally removes the N-terminal methionine from nascent proteins. The N-terminal methionine is often cleaved when the second residue in the primary sequence is small and uncharged (Met-Ala-, Cys, Gly, Pro, Ser, Thr, or Val). The chain is Methionine aminopeptidase 2 from Aspergillus oryzae (strain ATCC 42149 / RIB 40) (Yellow koji mold).